Reading from the N-terminus, the 189-residue chain is MAGLTQSPSPPAPSLLSAQTEGGEFVESLGFNGTLLAQMFNFLVLLILLRAVAYKPFMNMLEKRRELIEGSIAAAEEDKKQAEQLRATLQADLQRSREQATEMMARATKNAEEQAQQIIEAAKAEAARVKDSALSEIQREKERAVAELRDQVATLSILVAGKIIDQKLNDDVQKDLVNKFVKEAGDLPC.

The helical transmembrane segment at 35 to 54 (LLAQMFNFLVLLILLRAVAY) threads the bilayer.

Belongs to the ATPase B chain family. As to quaternary structure, F-type ATPases have 2 components, F(1) - the catalytic core - and F(0) - the membrane proton channel. F(1) has five subunits: alpha(3), beta(3), gamma(1), delta(1), epsilon(1). F(0) has three main subunits: a(1), b(2) and c(10-14). The alpha and beta chains form an alternating ring which encloses part of the gamma chain. F(1) is attached to F(0) by a central stalk formed by the gamma and epsilon chains, while a peripheral stalk is formed by the delta and b chains.

It is found in the cell membrane. In terms of biological role, f(1)F(0) ATP synthase produces ATP from ADP in the presence of a proton or sodium gradient. F-type ATPases consist of two structural domains, F(1) containing the extramembraneous catalytic core and F(0) containing the membrane proton channel, linked together by a central stalk and a peripheral stalk. During catalysis, ATP synthesis in the catalytic domain of F(1) is coupled via a rotary mechanism of the central stalk subunits to proton translocation. Its function is as follows. Component of the F(0) channel, it forms part of the peripheral stalk, linking F(1) to F(0). This Desulforamulus reducens (strain ATCC BAA-1160 / DSM 100696 / MI-1) (Desulfotomaculum reducens) protein is ATP synthase subunit b.